The primary structure comprises 492 residues: uncharacterized protein (492 aa).

Residue Gly266–Ser273 coordinates ATP.

It belongs to the AAA ATPase family. Highly divergent.

It is found in the plastid. Its subcellular location is the chloroplast. This is an uncharacterized protein from Pyropia yezoensis (Susabi-nori).